The following is a 667-amino-acid chain: MAKFNLKSNYQPRGDQPQAIEELSTGLQRGDKHQVLLGVTGSGKTFTMANVVAQVQRPTLVLAHNKTLAAQLYGEFKELFPDNAVEYFVSYYDYYQPEAYVPTTDTFIEKDSSINEEIDKMRHSATRSLLSRNDVLIVSSVSCIYGLGSPEAYYGMLIRLETGMQLDRNALLKNLVEIQYDRNDVDFHRGTFRVRGDTVEIFPAYEEKRALRIEFFGDEIDAICEIDPLRGKVLDRLERTAVFPASHYVATRPTLDRAIREIQDELRERLTWFRENNMLLEAQRIEQRTMFDIEMIEEMGYCQGIENYSRFLDGRQAGQPPATLFDYFPDDALLFIDESHVTVSQIGAMYRGDRSRKETLVRYGFRMPSALDNRPLTFEEFEAKGIQTIYVSATPADYELRKADGVVVEQIIRPTGLLDPPIDVRPAKDQVDDLIHEIRLTIKQNERVLVTTLTKRMAEELTGYLGELGIKVRYLHSDIDTVERMQILRELREGLFDVLVGINLLREGLDIPEVSLVAILDADKEGFLRSERSLIQTCGRAARNVAGRVIMYADRITRSMRACLDETERRRTAQLAYNEEHGITPQTVKKSLRSILEDIAEKDYVELPQVAEELGDYHTPQDVKNEIARVKEEMLAAAANLEFEKAAELRDRMLELDKLELSIRNVK.

The Helicase ATP-binding domain maps to 25–414; sequence TGLQRGDKHQ…GVVVEQIIRP (390 aa). Residue 38-45 coordinates ATP; that stretch reads GVTGSGKT. Positions 91 to 114 match the Beta-hairpin motif; sequence YYDYYQPEAYVPTTDTFIEKDSSI. Residues 430–596 enclose the Helicase C-terminal domain; the sequence is QVDDLIHEIR…TVKKSLRSIL (167 aa). The region spanning 624–659 is the UVR domain; that stretch reads KNEIARVKEEMLAAAANLEFEKAAELRDRMLELDKL.

It belongs to the UvrB family. As to quaternary structure, forms a heterotetramer with UvrA during the search for lesions. Interacts with UvrC in an incision complex.

It is found in the cytoplasm. Its function is as follows. The UvrABC repair system catalyzes the recognition and processing of DNA lesions. A damage recognition complex composed of 2 UvrA and 2 UvrB subunits scans DNA for abnormalities. Upon binding of the UvrA(2)B(2) complex to a putative damaged site, the DNA wraps around one UvrB monomer. DNA wrap is dependent on ATP binding by UvrB and probably causes local melting of the DNA helix, facilitating insertion of UvrB beta-hairpin between the DNA strands. Then UvrB probes one DNA strand for the presence of a lesion. If a lesion is found the UvrA subunits dissociate and the UvrB-DNA preincision complex is formed. This complex is subsequently bound by UvrC and the second UvrB is released. If no lesion is found, the DNA wraps around the other UvrB subunit that will check the other stand for damage. The polypeptide is UvrABC system protein B (Syntrophotalea carbinolica (strain DSM 2380 / NBRC 103641 / GraBd1) (Pelobacter carbinolicus)).